Here is a 613-residue protein sequence, read N- to C-terminus: Chaperone protein dnaK (613 aa).

The protein belongs to the heat shock protein 70 family.

It localises to the plastid. It is found in the chloroplast. Acts as a chaperone. This chain is Chaperone protein dnaK, found in Phaeodactylum tricornutum (strain CCAP 1055/1).